The chain runs to 448 residues: Ribonuclease J (448 aa).

Residues His-81, His-83, Asp-85, His-86, His-151, and Asp-173 each contribute to the Zn(2+) site. 383–387 is a binding site for substrate; it reads HVSGH. Residue His-409 participates in Zn(2+) binding.

The protein belongs to the metallo-beta-lactamase superfamily. RNA-metabolizing metallo-beta-lactamase-like family. Archaeal RNase J subfamily. In terms of assembly, forms homodimers on heating to 60 degrees Celsius which may be the active form. The cofactor is Zn(2+).

Its subcellular location is the cytoplasm. Its activity is regulated as follows. Inhibited by imidazole. In terms of biological role, a 5'-3' exoribonuclease with a strong reference for 5'-monophosphorylated RNA and no endoribonuclease activty. Also has robust 5'-'3 nuclease activity on single-stranded DNA (exodeoxyribonuclease, exoDNase). May be involved in RNA degradation. In Methanocaldococcus jannaschii (strain ATCC 43067 / DSM 2661 / JAL-1 / JCM 10045 / NBRC 100440) (Methanococcus jannaschii), this protein is Ribonuclease J.